The sequence spans 514 residues: Cytochrome P450 71AP13 (514 aa).

A helical transmembrane segment spans residues 20–37 (HSSLFAFSLLILLLKFIY). Residues Asn-127 and Asn-184 are each glycosylated (N-linked (GlcNAc...) asparagine). Cys-455 lines the heme pocket.

This sequence belongs to the cytochrome P450 family. Requires heme as cofactor. Expressed in fruit kernel, seedlings, leaves and stems.

Its subcellular location is the membrane. This chain is Cytochrome P450 71AP13, found in Prunus mume (Japanese apricot).